The following is a 399-amino-acid chain: Leu/Ile/Val-binding protein homolog 7 (399 aa).

The first 22 residues, 1–22 (MEKHLIALSVAALQAGAAPASA), serve as a signal peptide directing secretion.

The protein belongs to the leucine-binding protein family.

Its function is as follows. Component of an amino-acid transport system. The chain is Leu/Ile/Val-binding protein homolog 7 from Brucella abortus (strain 2308).